We begin with the raw amino-acid sequence, 659 residues long: Ion-translocating oxidoreductase complex subunit C (659 aa).

4Fe-4S ferredoxin-type domains lie at 366-397 (TEMG…QQLY) and 407-436 (KARN…VQYY). The [4Fe-4S] cluster site is built by cysteine 377, cysteine 380, cysteine 383, cysteine 387, cysteine 416, cysteine 419, cysteine 422, and cysteine 426.

It belongs to the 4Fe4S bacterial-type ferredoxin family. RnfC subfamily. In terms of assembly, the complex is composed of six subunits: RnfA, RnfB, RnfC, RnfD, RnfE and RnfG. The cofactor is [4Fe-4S] cluster.

The protein localises to the cell inner membrane. Part of a membrane-bound complex that couples electron transfer with translocation of ions across the membrane. In Yersinia pseudotuberculosis serotype IB (strain PB1/+), this protein is Ion-translocating oxidoreductase complex subunit C.